The following is a 94-amino-acid chain: Putative pterin-4-alpha-carbinolamine dehydratase (94 aa).

The protein belongs to the pterin-4-alpha-carbinolamine dehydratase family.

It carries out the reaction (4aS,6R)-4a-hydroxy-L-erythro-5,6,7,8-tetrahydrobiopterin = (6R)-L-erythro-6,7-dihydrobiopterin + H2O. In Mycobacterium sp. (strain JLS), this protein is Putative pterin-4-alpha-carbinolamine dehydratase.